The sequence spans 345 residues: Polyprenyl transferase dpmpC (345 aa).

8 helical membrane passes run 24–44 (PVFASFAGLWSTLLAGAARLA), 60–80 (GLCFLAAYIFYGAGTVWNDWV), 101–121 (VTTFQAMLWMVLQTLATWYLL), 183–203 (LYVYPQYILGFIVAWPAVIGW), 220–240 (CLPLCSMVYFWIIYLNTAYSY), 261–281 (HLHLLLVALASPVPVCMLLFL), 286–306 (SFWLWATWLGGWTASFAEQLI), and 319–339 (LHKSNFMLGIWTIFACAVELL).

This sequence belongs to the UbiA prenyltransferase family. Mg(2+) is required as a cofactor.

The protein resides in the membrane. It functions in the pathway secondary metabolite biosynthesis; terpenoid biosynthesis. Functionally, polyprenyl transferase; part of the gene cluster that mediates the biosynthesis of diterpenoid pyrones. The first step of the pathway is the synthesis of the alpha-pyrone moiety by the polyketide synthase dpmpA via condensation of one acetyl-CoA starter unit with 3 malonyl-CoA units and 2 methylations. The alpha-pyrone is then combined with geranylgeranyl pyrophosphate (GGPP) formed by the GGPP synthase dpmpD through the action of the prenyltransferase dpmpC to yield a linear alpha-pyrone diterpenoid. Subsequent steps in the diterpenoid pyrone biosynthetic pathway involve the decalin core formation, which is initiated by the epoxidation of the C10-C11 olefin by the FAD-dependent oxidoreductase dpmpE, and is followed by a cyclization cascade catalyzed by the terpene cyclase dpmpB. The short chain dehydrogenase/reductase dpmpG then oxidizes the 8S hydroxy group to a ketone and the short chain dehydrogenase/reductase dpmpH reduces the ketone to the 8R hydroxy group to yield higginsianin B. Higginsianin B is further methylated by the methyltransferase dpmpI to produce the intermediate named FDDP B. The cytochrome P450 monooxygenase dpmpJ then oxidizes the C-26 methyl to primary alcohol, producing the final diterpenoid pyrone with a C-26 primary alcohol on the gamma-pyrone moiety named FDDP C. This Macrophomina phaseolina (strain MS6) (Charcoal rot fungus) protein is Polyprenyl transferase dpmpC.